A 568-amino-acid polypeptide reads, in one-letter code: Serine/threonine-protein kinase RIO1 (568 aa).

2 disordered regions span residues 14–70 and 83–109; these read GQFD…DDDW and YVWN…STPA. Phosphoserine occurs at positions 21 and 22. Residues 24–38 are compositionally biased toward basic and acidic residues; the sequence is SENRDLKTVKEKDDI. The segment covering 51–70 has biased composition (acidic residues); the sequence is GEGEIEDEEEEGYDDDDDDW. Residues 87–105 are compositionally biased toward polar residues; the sequence is GGSNPQANRQTSDSSSAKM. The Protein kinase domain maps to 180–479; that stretch reads TEINGCISTG…TGLKKDLSGV (300 aa). Lys208, Ser278, and Ile280 together coordinate ATP. Asp324 serves as the catalytic Proton acceptor. Mg(2+)-binding residues include Asn329 and Asp341. Asp341 (4-aspartylphosphate intermediate) is an active-site residue. Positions 490-568 are disordered; that stretch reads VEERTCSDSE…EKTAKTKKGK (79 aa). Positions 497 to 513 are enriched in acidic residues; sequence DSEDIGSSECSDTDSEE. A compositionally biased stretch (basic and acidic residues) spans 514 to 543; the sequence is QGDHARPKKHTTDPDIDKKERKKMVKEAQR. Over residues 544–568 the composition is skewed to basic residues; sequence EKRKNKIPKHVKKRKEKTAKTKKGK.

Belongs to the protein kinase superfamily. RIO-type Ser/Thr kinase family. As to quaternary structure, associates with the precursor of the 40S ribosome subunit. Interacts (via its N-terminus) with PRMT5 (via its N-terminus). Interacts with WDR77. Found in a PRMT5 complex composed of PRMT5, WDR77 and RIOK1. Interacts (via its C-terminus) with NCL; this interaction targets NCL for PRTM5 methylation. Requires Mg(2+) as cofactor.

It is found in the cytoplasm. The protein localises to the cytosol. It carries out the reaction L-seryl-[protein] + ATP = O-phospho-L-seryl-[protein] + ADP + H(+). The enzyme catalyses L-threonyl-[protein] + ATP = O-phospho-L-threonyl-[protein] + ADP + H(+). It catalyses the reaction ATP + H2O = ADP + phosphate + H(+). Its function is as follows. Involved in the final steps of cytoplasmic maturation of the 40S ribosomal subunit. Involved in processing of 18S-E pre-rRNA to the mature 18S rRNA. Required for the recycling of NOB1 and PNO1 from the late 40S precursor. The association with the very late 40S subunit intermediate may involve a translation-like checkpoint point cycle preceeding the binding to the 60S ribosomal subunit. Despite the protein kinase domain is proposed to act predominantly as an ATPase. The catalytic activity regulates its dynamic association with the 40S subunit. In addition to its role in ribosomal biogenesis acts as an adapter protein by recruiting NCL/nucleolin the to PRMT5 complex for its symmetrical methylation. In Homo sapiens (Human), this protein is Serine/threonine-protein kinase RIO1.